The sequence spans 263 residues: TPR repeat-containing protein DDB_G0285095 (263 aa).

Residues 1–25 (MGCCGSKEKYNGEDVPKSQRLENRP) show a composition bias toward basic and acidic residues. Positions 1–62 (MGCCGSKEKY…ASASQQNNPT (62 aa)) are disordered. TPR repeat units lie at residues 87 to 120 (SDLL…DTDN), 121 to 154 (SRAW…AAPK), and 162 to 195 (SSLL…GARS).

The polypeptide is TPR repeat-containing protein DDB_G0285095 (Dictyostelium discoideum (Social amoeba)).